We begin with the raw amino-acid sequence, 328 residues long: dTDP-3,4-didehydro-2,6-dideoxy-alpha-D-glucose 3-reductase (328 aa).

Arg-20 contacts substrate. Residues 38–39 (SR), Leu-75, and His-80 each bind NADP(+). The active-site Proton donor is Lys-98. Positions 166 and 178 each coordinate NADP(+). Substrate is bound by residues Tyr-236 and Thr-256.

This sequence belongs to the Gfo/Idh/MocA family.

The enzyme catalyses dTDP-4-dehydro-2,6-dideoxy-alpha-D-glucose + NADP(+) = dTDP-3,4-didehydro-2,6-dideoxy-alpha-D-glucose + NADPH + H(+). It participates in antibiotic biosynthesis. Functionally, involved in the biosynthesis of one of the two 2,6-deoxysugars, dTDP-L-oleandrose, attached to the macrolactone ring oleandolide to produce the aglycone antibiotic oleandomycin. Catalyzes the reduction of the C-3 keto moiety of dTDP-3,4-diketo-2,6-dideoxy-alpha-D-glucose to yield dTDP-4-keto-2,6-dideoxy-alpha-D-glucose. NADPH is the better reductant, however NADH can also be used. The sequence is that of dTDP-3,4-didehydro-2,6-dideoxy-alpha-D-glucose 3-reductase from Streptomyces antibioticus.